A 238-amino-acid chain; its full sequence is Ubiquinone biosynthesis O-methyltransferase (238 aa).

S-adenosyl-L-methionine is bound by residues Arg40, Gly59, Asp80, and Met124.

The protein belongs to the methyltransferase superfamily. UbiG/COQ3 family.

It carries out the reaction a 3-demethylubiquinol + S-adenosyl-L-methionine = a ubiquinol + S-adenosyl-L-homocysteine + H(+). The catalysed reaction is a 3-(all-trans-polyprenyl)benzene-1,2-diol + S-adenosyl-L-methionine = a 2-methoxy-6-(all-trans-polyprenyl)phenol + S-adenosyl-L-homocysteine + H(+). It participates in cofactor biosynthesis; ubiquinone biosynthesis. O-methyltransferase that catalyzes the 2 O-methylation steps in the ubiquinone biosynthetic pathway. The polypeptide is Ubiquinone biosynthesis O-methyltransferase (Ralstonia nicotianae (strain ATCC BAA-1114 / GMI1000) (Ralstonia solanacearum)).